The chain runs to 1299 residues: Tubulin polyglutamylase TTLL5 (1299 aa).

The 346-residue stretch at 62–407 (RYHLSYKIVR…VCQDPAQRAS (346 aa)) folds into the TTL domain. ATP contacts are provided by residues Lys180, 186–187 (RG), 208–211 (SRYI), and 221–223 (KFD). Arg186 provides a ligand contact to a protein. Arg247 provides a ligand contact to L-glutamate. ATP is bound at residue 268 to 269 (TN). The L-glutamate site is built by Tyr270, Ser271, and Lys293. Positions 353, 366, and 368 each coordinate Mg(2+). The segment at 378 to 488 (PLDLKIKASM…RGGFIRIFPT (111 aa)) is c-MTBD region. Lys384 contacts L-glutamate. Disordered regions lie at residues 589–626 (EMNV…FLRE), 832–853 (GTHS…KGDH), 918–941 (SSVT…IPSA), 1088–1130 (RSSA…RSLQ), and 1217–1275 (SSAT…QLNG). The segment covering 597 to 617 (ESEEEEEVALDNEEEEQEASQ) has biased composition (acidic residues). Low complexity predominate over residues 838–847 (SKNNNSYSDS). 3 stretches are compositionally biased toward polar residues: residues 1104-1130 (SGPT…RSLQ), 1217-1230 (SSAT…TTLP), and 1258-1275 (ATSQ…QLNG).

Belongs to the tubulin--tyrosine ligase family. In terms of assembly, interacts with the transcriptional coactivators NCOA1/SRC-1 and NCOA2/TIF2. Mg(2+) serves as cofactor.

It localises to the cell projection. It is found in the cilium. The protein localises to the cytoplasm. The protein resides in the cytoskeleton. Its subcellular location is the cilium basal body. It localises to the nucleus. The enzyme catalyses L-glutamyl-[protein] + L-glutamate + ATP = gamma-L-glutamyl-L-glutamyl-[protein] + ADP + phosphate + H(+). It catalyses the reaction (L-glutamyl)(n)-gamma-L-glutamyl-L-glutamyl-[protein] + L-glutamate + ATP = (L-glutamyl)(n+1)-gamma-L-glutamyl-L-glutamyl-[protein] + ADP + phosphate + H(+). In terms of biological role, polyglutamylase which modifies tubulin, generating polyglutamate side chains on the gamma-carboxyl group of specific glutamate residues within the C-terminal tail of tubulin. Preferentially mediates ATP-dependent initiation step of the polyglutamylation reaction over the elongation step. Preferentially modifies the alpha-tubulin tail over a beta-tail. Required for CCSAP localization to both polyglutamylated spindle and cilia microtubules. Increases the effects of transcriptional coactivator NCOA2/TIF2 in glucocorticoid receptor-mediated repression and induction and in androgen receptor-mediated induction. In Pongo abelii (Sumatran orangutan), this protein is Tubulin polyglutamylase TTLL5 (TTLL5).